Here is a 528-residue protein sequence, read N- to C-terminus: GMP synthase [glutamine-hydrolyzing] (528 aa).

The region spanning threonine 13–threonine 203 is the Glutamine amidotransferase type-1 domain. The active-site Nucleophile is cysteine 90. Catalysis depends on residues histidine 177 and glutamate 179. The GMPS ATP-PPase domain maps to tryptophan 204–arginine 402. Serine 231–alanine 237 is an ATP binding site.

As to quaternary structure, homodimer.

It carries out the reaction XMP + L-glutamine + ATP + H2O = GMP + L-glutamate + AMP + diphosphate + 2 H(+). It functions in the pathway purine metabolism; GMP biosynthesis; GMP from XMP (L-Gln route): step 1/1. Its function is as follows. Catalyzes the synthesis of GMP from XMP. This Thermobifida fusca (strain YX) protein is GMP synthase [glutamine-hydrolyzing].